Reading from the N-terminus, the 1135-residue chain is Phytochrome C (1135 aa).

The span at methionine 1 to cysteine 11 shows a compositional bias: polar residues. The interval methionine 1–valine 26 is disordered. The GAF domain maps to asparagine 216–valine 399. Residue cysteine 321 coordinates phytochromobilin. PAS domains lie at valine 618–isoleucine 688 and isoleucine 748–serine 822. One can recognise a Histidine kinase domain in the interval tyrosine 902–glutamine 1122.

This sequence belongs to the phytochrome family. As to quaternary structure, homodimer. Post-translationally, contains one covalently linked phytochromobilin chromophore.

Its function is as follows. Regulatory photoreceptor which exists in two forms that are reversibly interconvertible by light: the Pr form that absorbs maximally in the red region of the spectrum and the Pfr form that absorbs maximally in the far-red region. Photoconversion of Pr to Pfr induces an array of morphogenic responses, whereas reconversion of Pfr to Pr cancels the induction of those responses. Pfr controls the expression of a number of nuclear genes including those encoding the small subunit of ribulose-bisphosphate carboxylase, chlorophyll A/B binding protein, protochlorophyllide reductase, rRNA, etc. It also controls the expression of its own gene(s) in a negative feedback fashion. In Sorghum bicolor (Sorghum), this protein is Phytochrome C (PHYC).